The primary structure comprises 84 residues: UPF0473 protein CPF_2030 (84 aa).

This sequence belongs to the UPF0473 family.

The chain is UPF0473 protein CPF_2030 from Clostridium perfringens (strain ATCC 13124 / DSM 756 / JCM 1290 / NCIMB 6125 / NCTC 8237 / Type A).